The sequence spans 1047 residues: Isoleucine--tRNA ligase (1047 aa).

Residues 52–62 (PTANGMPGAHH) carry the 'HIGH' region motif. The short motif at 600–604 (KMSKH) is the 'KMSKS' region element. Lysine 603 contacts ATP.

This sequence belongs to the class-I aminoacyl-tRNA synthetase family. IleS type 2 subfamily. As to quaternary structure, monomer. Requires Zn(2+) as cofactor.

Its subcellular location is the cytoplasm. It catalyses the reaction tRNA(Ile) + L-isoleucine + ATP = L-isoleucyl-tRNA(Ile) + AMP + diphosphate. Functionally, catalyzes the attachment of isoleucine to tRNA(Ile). As IleRS can inadvertently accommodate and process structurally similar amino acids such as valine, to avoid such errors it has two additional distinct tRNA(Ile)-dependent editing activities. One activity is designated as 'pretransfer' editing and involves the hydrolysis of activated Val-AMP. The other activity is designated 'posttransfer' editing and involves deacylation of mischarged Val-tRNA(Ile). This is Isoleucine--tRNA ligase from Streptomyces avermitilis (strain ATCC 31267 / DSM 46492 / JCM 5070 / NBRC 14893 / NCIMB 12804 / NRRL 8165 / MA-4680).